The chain runs to 164 residues: Crossover junction endodeoxyribonuclease RuvC (164 aa).

Residues Asp7, Glu67, and Asp139 contribute to the active site. Mg(2+) is bound by residues Asp7, Glu67, and Asp139.

This sequence belongs to the RuvC family. In terms of assembly, homodimer which binds Holliday junction (HJ) DNA. The HJ becomes 2-fold symmetrical on binding to RuvC with unstacked arms; it has a different conformation from HJ DNA in complex with RuvA. In the full resolvosome a probable DNA-RuvA(4)-RuvB(12)-RuvC(2) complex forms which resolves the HJ. The cofactor is Mg(2+).

It is found in the cytoplasm. It catalyses the reaction Endonucleolytic cleavage at a junction such as a reciprocal single-stranded crossover between two homologous DNA duplexes (Holliday junction).. Its function is as follows. The RuvA-RuvB-RuvC complex processes Holliday junction (HJ) DNA during genetic recombination and DNA repair. Endonuclease that resolves HJ intermediates. Cleaves cruciform DNA by making single-stranded nicks across the HJ at symmetrical positions within the homologous arms, yielding a 5'-phosphate and a 3'-hydroxyl group; requires a central core of homology in the junction. The consensus cleavage sequence is 5'-(A/T)TT(C/G)-3'. Cleavage occurs on the 3'-side of the TT dinucleotide at the point of strand exchange. HJ branch migration catalyzed by RuvA-RuvB allows RuvC to scan DNA until it finds its consensus sequence, where it cleaves and resolves the cruciform DNA. The chain is Crossover junction endodeoxyribonuclease RuvC from Citrifermentans bemidjiense (strain ATCC BAA-1014 / DSM 16622 / JCM 12645 / Bem) (Geobacter bemidjiensis).